Consider the following 287-residue polypeptide: Urease accessory protein UreD (287 aa).

The protein belongs to the UreD family. In terms of assembly, ureD, UreF and UreG form a complex that acts as a GTP-hydrolysis-dependent molecular chaperone, activating the urease apoprotein by helping to assemble the nickel containing metallocenter of UreC. The UreE protein probably delivers the nickel.

It is found in the cytoplasm. Functionally, required for maturation of urease via the functional incorporation of the urease nickel metallocenter. The protein is Urease accessory protein UreD of Aliivibrio fischeri (strain MJ11) (Vibrio fischeri).